The following is a 212-amino-acid chain: Peptide methionine sulfoxide reductase MsrA (212 aa).

C52 is a catalytic residue.

It belongs to the MsrA Met sulfoxide reductase family.

It carries out the reaction L-methionyl-[protein] + [thioredoxin]-disulfide + H2O = L-methionyl-(S)-S-oxide-[protein] + [thioredoxin]-dithiol. The catalysed reaction is [thioredoxin]-disulfide + L-methionine + H2O = L-methionine (S)-S-oxide + [thioredoxin]-dithiol. Functionally, has an important function as a repair enzyme for proteins that have been inactivated by oxidation. Catalyzes the reversible oxidation-reduction of methionine sulfoxide in proteins to methionine. This chain is Peptide methionine sulfoxide reductase MsrA, found in Escherichia coli (strain SMS-3-5 / SECEC).